Here is a 291-residue protein sequence, read N- to C-terminus: Bifunctional protein FolD (291 aa).

Residues 173–175 (GRS) and S198 each bind NADP(+).

Belongs to the tetrahydrofolate dehydrogenase/cyclohydrolase family. In terms of assembly, homodimer.

The catalysed reaction is (6R)-5,10-methylene-5,6,7,8-tetrahydrofolate + NADP(+) = (6R)-5,10-methenyltetrahydrofolate + NADPH. The enzyme catalyses (6R)-5,10-methenyltetrahydrofolate + H2O = (6R)-10-formyltetrahydrofolate + H(+). It functions in the pathway one-carbon metabolism; tetrahydrofolate interconversion. Its function is as follows. Catalyzes the oxidation of 5,10-methylenetetrahydrofolate to 5,10-methenyltetrahydrofolate and then the hydrolysis of 5,10-methenyltetrahydrofolate to 10-formyltetrahydrofolate. This chain is Bifunctional protein FolD, found in Psychrobacter sp. (strain PRwf-1).